A 176-amino-acid chain; its full sequence is Macro domain-containing protein lmo2759 (176 aa).

Residues 1-175 (MEITIVKGDI…LYNKLINSEV (175 aa)) form the Macro domain.

This sequence belongs to the MacroD-type family.

The chain is Macro domain-containing protein lmo2759 from Listeria monocytogenes serovar 1/2a (strain ATCC BAA-679 / EGD-e).